A 348-amino-acid polypeptide reads, in one-letter code: Protein RecA (348 aa).

69–76 (GPESSGKT) contributes to the ATP binding site.

The protein belongs to the RecA family.

It is found in the cytoplasm. In terms of biological role, can catalyze the hydrolysis of ATP in the presence of single-stranded DNA, the ATP-dependent uptake of single-stranded DNA by duplex DNA, and the ATP-dependent hybridization of homologous single-stranded DNAs. It interacts with LexA causing its activation and leading to its autocatalytic cleavage. The chain is Protein RecA from Picosynechococcus sp. (strain ATCC 27264 / PCC 7002 / PR-6) (Agmenellum quadruplicatum).